A 716-amino-acid chain; its full sequence is Beta-1,2-glucosyltransferase (716 aa).

10 residues coordinate sophorose: Tyr-52, Ile-99, Ala-101, Glu-102, Asn-175, Glu-176, Gly-278, Trp-279, Glu-343, and Arg-349. Glu-176 (proton donor/acceptor) is an active-site residue. Beta-D-glucose is bound by residues Glu-176, Gly-278, and Trp-279. Residue Glu-343 is the Nucleophile of the active site. The beta-D-glucose site is built by Arg-349, Lys-358, and Glu-361. Tyr-378 contributes to the sophorose binding site. Residues Ser-708 and Tyr-709 each coordinate beta-D-glucose.

This sequence belongs to the glycosyl hydrolase 35 family. Homidimer.

It is found in the cytoplasm. The enzyme catalyses a D-glucoside + [(1-&gt;2)-beta-D-glucosyl](n) = a beta-D-glucosyl-(1-&gt;2)-D-glucoside + [(1-&gt;2)-beta-D-glucosyl](n-1). Its function is as follows. Glycosyltransferase acting on beta-1,2-glucooligosaccharides. Catalyzes the transfer of a glucosyl residue from the non-reducing end of a 1,2-beta-D-glucan to a glucose residue of an acceptor molecule, forming a beta-1,2-glucosidic bond. The beta-1,2-linked glucose dimer sophorose is the preferred donor in vitro. Has a very broad specificity for the acceptor and can act on various aryl- and alkyl-glucosides. Does not show any hydrolytic activity. This is Beta-1,2-glucosyltransferase from Ignavibacterium album (strain DSM 19864 / JCM 16511 / NBRC 101810 / Mat9-16).